Consider the following 514-residue polypeptide: Adenylosuccinate synthetase 2, chloroplastic (514 aa).

A chloroplast-targeting transit peptide spans 1–56 (MAMAAAAAVASQGLLATSSQQQKKSSAKLICNAATFFSGKRLLWVKSCNNGAVGLR). GTP is bound by residues 100 to 106 (GDEGKGK) and 128 to 130 (GHT). The Proton acceptor role is filled by aspartate 101. Mg(2+)-binding residues include aspartate 101 and glycine 128. IMP-binding positions include 101–104 (DEGK), 126–129 (NAGH), threonine 218, arginine 232, glutamine 312, threonine 327, and arginine 391. Histidine 129 serves as the catalytic Proton donor. 387–393 (TTTGRPR) is a substrate binding site. GTP-binding positions include arginine 393, 419–421 (KLD), and 502–504 (GVG).

Belongs to the adenylosuccinate synthetase family. As to quaternary structure, homodimer. It depends on Mg(2+) as a cofactor.

The protein localises to the plastid. Its subcellular location is the chloroplast. The enzyme catalyses IMP + L-aspartate + GTP = N(6)-(1,2-dicarboxyethyl)-AMP + GDP + phosphate + 2 H(+). It participates in purine metabolism; AMP biosynthesis via de novo pathway; AMP from IMP: step 1/2. Plays an important role in the de novo pathway and in the salvage pathway of purine nucleotide biosynthesis. Catalyzes the first committed step in the biosynthesis of AMP from IMP. This chain is Adenylosuccinate synthetase 2, chloroplastic, found in Physcomitrium patens (Spreading-leaved earth moss).